A 140-amino-acid polypeptide reads, in one-letter code: Class I hydrophobin B (140 aa).

The signal sequence occupies residues 1–16; sequence MKFLAVVSLLAATALA. Disulfide bonds link Cys42–Cys113, Cys50–Cys107, Cys51–Cys88, and Cys114–Cys133. Asn117 carries N-linked (GlcNAc...) asparagine glycosylation.

Belongs to the fungal hydrophobin family. Self-assembles to form functional amyloid fibrils called rodlets. Self-assembly into fibrillar rodlets occurs spontaneously at hydrophobic:hydrophilic interfaces and the rodlets further associate laterally to form amphipathic monolayers.

It localises to the secreted. Its subcellular location is the spore wall. Aerial growth, conidiation, and dispersal of filamentous fungi in the environment rely upon a capability of their secreting small amphipathic proteins called hydrophobins (HPBs) with low sequence identity. Class I can self-assemble into an outermost layer of rodlet bundles on aerial cell surfaces, conferring cellular hydrophobicity that supports fungal growth, development and dispersal; whereas Class II form highly ordered films at water-air interfaces through intermolecular interactions but contribute nothing to the rodlet structure. RodB is a class I hydrophobin that, unlike rodA, is not required for rodlet formation. The polypeptide is Class I hydrophobin B (Aspergillus fumigatus (strain ATCC MYA-4609 / CBS 101355 / FGSC A1100 / Af293) (Neosartorya fumigata)).